A 359-amino-acid chain; its full sequence is GTP cyclohydrolase FolE2 (359 aa).

The protein belongs to the GTP cyclohydrolase IV family.

The enzyme catalyses GTP + H2O = 7,8-dihydroneopterin 3'-triphosphate + formate + H(+). It functions in the pathway cofactor biosynthesis; 7,8-dihydroneopterin triphosphate biosynthesis; 7,8-dihydroneopterin triphosphate from GTP: step 1/1. Converts GTP to 7,8-dihydroneopterin triphosphate. The chain is GTP cyclohydrolase FolE2 from Cereibacter sphaeroides (strain ATCC 17029 / ATH 2.4.9) (Rhodobacter sphaeroides).